The primary structure comprises 124 residues: Small ribosomal subunit protein uS12 (124 aa).

The interval 1 to 24 (MTTINQLVRKPRQATTYKSASPAL) is disordered. A 3-methylthioaspartic acid modification is found at D89.

Belongs to the universal ribosomal protein uS12 family. Part of the 30S ribosomal subunit. Contacts proteins S8 and S17. May interact with IF1 in the 30S initiation complex.

Its function is as follows. With S4 and S5 plays an important role in translational accuracy. Interacts with and stabilizes bases of the 16S rRNA that are involved in tRNA selection in the A site and with the mRNA backbone. Located at the interface of the 30S and 50S subunits, it traverses the body of the 30S subunit contacting proteins on the other side and probably holding the rRNA structure together. The combined cluster of proteins S8, S12 and S17 appears to hold together the shoulder and platform of the 30S subunit. This Xanthomonas axonopodis pv. citri (strain 306) protein is Small ribosomal subunit protein uS12.